We begin with the raw amino-acid sequence, 137 residues long: Small ribosomal subunit protein uS12 (137 aa).

The disordered stretch occupies residues 1–23 (MPTINQLVRKPRKSNATKSKSPA). Position 102 is a 3-methylthioaspartic acid (Asp-102).

This sequence belongs to the universal ribosomal protein uS12 family. Part of the 30S ribosomal subunit. Contacts proteins S8 and S17. May interact with IF1 in the 30S initiation complex.

Functionally, with S4 and S5 plays an important role in translational accuracy. Its function is as follows. Interacts with and stabilizes bases of the 16S rRNA that are involved in tRNA selection in the A site and with the mRNA backbone. Located at the interface of the 30S and 50S subunits, it traverses the body of the 30S subunit contacting proteins on the other side and probably holding the rRNA structure together. The combined cluster of proteins S8, S12 and S17 appears to hold together the shoulder and platform of the 30S subunit. The protein is Small ribosomal subunit protein uS12 of Leuconostoc citreum (strain KM20).